Consider the following 451-residue polypeptide: Signal recognition particle protein (451 aa).

GTP contacts are provided by residues 107 to 114, 190 to 194, and 248 to 251; these read GLQGSGKT, DTAGR, and TKTD.

This sequence belongs to the GTP-binding SRP family. SRP54 subfamily. In terms of assembly, part of the signal recognition particle protein translocation system, which is composed of SRP and FtsY. SRP is a ribonucleoprotein composed of Ffh and a 4.5S RNA molecule.

The protein resides in the cytoplasm. The catalysed reaction is GTP + H2O = GDP + phosphate + H(+). Its function is as follows. Involved in targeting and insertion of nascent membrane proteins into the cytoplasmic membrane. Binds to the hydrophobic signal sequence of the ribosome-nascent chain (RNC) as it emerges from the ribosomes. The SRP-RNC complex is then targeted to the cytoplasmic membrane where it interacts with the SRP receptor FtsY. Interaction with FtsY leads to the transfer of the RNC complex to the Sec translocase for insertion into the membrane, the hydrolysis of GTP by both Ffh and FtsY, and the dissociation of the SRP-FtsY complex into the individual components. This chain is Signal recognition particle protein, found in Buchnera aphidicola subsp. Acyrthosiphon pisum (strain APS) (Acyrthosiphon pisum symbiotic bacterium).